The sequence spans 68 residues: Riparin-1.5 amide (68 aa).

A signal peptide spans 1–15 (MKIIVVLAVLMLVSA). A propeptide spanning residues 16 to 41 (QVCLVSAAEMGHSSDNELSSRDLVKR) is cleaved from the precursor. Cysteine 47 and cysteine 53 form a disulfide bridge. Cysteine 53 carries the post-translational modification Cysteine amide. The propeptide occupies 57–68 (SIESSEGANGGE).

As to expression, expressed by the skin glands.

It localises to the secreted. This chain is Riparin-1.5 amide, found in Crinia riparia (Streambank froglet).